A 533-amino-acid polypeptide reads, in one-letter code: Calcineurin-interacting protein 3 (533 aa).

3 disordered regions span residues 1–30 (MRSL…NMDI), 53–85 (PRKQ…YTKR), and 359–404 (MDMS…LTLP). Basic and acidic residues predominate over residues 61–85 (KRAEPVSEEHRKKESSKNSREYTKR). Over residues 359-372 (MDMSQTLSPEQTLS) the composition is skewed to polar residues. The span at 373-384 (PREKLQVQDRKI) shows a compositional bias: basic and acidic residues.

The protein resides in the nucleus. In Caenorhabditis elegans, this protein is Calcineurin-interacting protein 3.